Consider the following 156-residue polypeptide: Envelope glycoprotein L (156 aa).

Residues 1 to 16 (MSPLVAVLVFFSAALG) form the signal peptide. Residues 50 to 156 (ELEWDDEDHP…LRYNGGPPAE (107 aa)) enclose the gL alphaherpesvirus-type domain. C71 and C95 form a disulfide bridge.

It belongs to the herpesviridae glycoprotein L (gL) family. Alphaherpesvirinae gL subfamily. As to quaternary structure, interacts with glycoprotein H (gH); this interaction is necessary for the correct processing and cell surface expression of gH. The heterodimer gH/gL seems to interact with gB trimers during fusion. In terms of processing, O-glycosylated, and sialylated.

The protein resides in the virion membrane. It is found in the host cell membrane. The protein localises to the host Golgi apparatus. Its subcellular location is the host trans-Golgi network. Functionally, the heterodimer glycoprotein H-glycoprotein L is required for the fusion of viral and plasma membranes leading to virus entry into the host cell. Acts as a functional inhibitor of gH and maintains gH in an inhibited form. Upon binding to host integrins, gL dissociates from gH leading to activation of the viral fusion glycoproteins gB and gH. The protein is Envelope glycoprotein L of Suid herpesvirus 1 (strain Indiana-Funkhauser / Becker) (SuHV-1).